The sequence spans 54 residues: uncharacterized protein (54 aa).

This is an uncharacterized protein from Haemophilus influenzae (strain ATCC 51907 / DSM 11121 / KW20 / Rd).